The primary structure comprises 266 residues: ES1 protein homolog, mitochondrial (266 aa).

The N-terminal 39 residues, Met1–Pro39, are a transit peptide targeting the mitochondrion. N6-acetyllysine is present on residues Lys149, Lys155, and Lys162. Lys201 bears the N6-acetyllysine; alternate mark. Lys201 carries the N6-succinyllysine; alternate modification. An N6-acetyllysine modification is found at Lys217. Lys221 and Lys231 each carry N6-acetyllysine; alternate. An N6-succinyllysine; alternate mark is found at Lys221 and Lys231.

Belongs to the ES1 family.

The protein resides in the mitochondrion. The chain is ES1 protein homolog, mitochondrial from Rattus norvegicus (Rat).